The chain runs to 118 residues: Putative pterin-4-alpha-carbinolamine dehydratase (118 aa).

The protein belongs to the pterin-4-alpha-carbinolamine dehydratase family.

It catalyses the reaction (4aS,6R)-4a-hydroxy-L-erythro-5,6,7,8-tetrahydrobiopterin = (6R)-L-erythro-6,7-dihydrobiopterin + H2O. This is Putative pterin-4-alpha-carbinolamine dehydratase from Pseudomonas entomophila (strain L48).